A 196-amino-acid polypeptide reads, in one-letter code: ATP-dependent Clp protease proteolytic subunit (196 aa).

Residue serine 101 is the Nucleophile of the active site. Histidine 126 is a catalytic residue.

It belongs to the peptidase S14 family. As to quaternary structure, component of the chloroplastic Clp protease core complex.

The protein localises to the plastid. The protein resides in the chloroplast stroma. The catalysed reaction is Hydrolysis of proteins to small peptides in the presence of ATP and magnesium. alpha-casein is the usual test substrate. In the absence of ATP, only oligopeptides shorter than five residues are hydrolyzed (such as succinyl-Leu-Tyr-|-NHMec, and Leu-Tyr-Leu-|-Tyr-Trp, in which cleavage of the -Tyr-|-Leu- and -Tyr-|-Trp bonds also occurs).. In terms of biological role, cleaves peptides in various proteins in a process that requires ATP hydrolysis. Has a chymotrypsin-like activity. Plays a major role in the degradation of misfolded proteins. The chain is ATP-dependent Clp protease proteolytic subunit from Pleurastrum terricola (Filamentous green alga).